We begin with the raw amino-acid sequence, 72 residues long: Translation initiation factor IF-1 (72 aa).

An S1-like domain is found at 1-72 (MAKEDSIEMQ…TKGRIVFRAR (72 aa)).

It belongs to the IF-1 family. As to quaternary structure, component of the 30S ribosomal translation pre-initiation complex which assembles on the 30S ribosome in the order IF-2 and IF-3, IF-1 and N-formylmethionyl-tRNA(fMet); mRNA recruitment can occur at any time during PIC assembly.

The protein localises to the cytoplasm. In terms of biological role, one of the essential components for the initiation of protein synthesis. Stabilizes the binding of IF-2 and IF-3 on the 30S subunit to which N-formylmethionyl-tRNA(fMet) subsequently binds. Helps modulate mRNA selection, yielding the 30S pre-initiation complex (PIC). Upon addition of the 50S ribosomal subunit IF-1, IF-2 and IF-3 are released leaving the mature 70S translation initiation complex. This Shewanella amazonensis (strain ATCC BAA-1098 / SB2B) protein is Translation initiation factor IF-1.